Consider the following 783-residue polypeptide: Flavin carrier protein 2 (783 aa).

Residues 1 to 22 (MIFLNTFARCLLTCFVLCSGTA) form the signal peptide. At 23 to 182 (RSSDTNDTTP…NGKTVQTKYA (160 aa)) the chain is on the lumenal side. Residues Asn-28, Asn-65, Asn-81, and Asn-156 are each glycosylated (N-linked (GlcNAc...) asparagine). Residues 183–203 (AWPIAAISGVGVLTSGFVSVI) traverse the membrane as a helical segment. Residues 204-211 (GYSATAAH) are Cytoplasmic-facing. Residues 212 to 232 (IASNSISLFIYFQNLAITAMM) form a helical membrane-spanning segment. The Lumenal portion of the chain corresponds to 233–347 (GVSRVPPIAA…AYLANIELSN (115 aa)). An N-linked (GlcNAc...) asparagine glycan is attached at Asn-323. The helical transmembrane segment at 348–368 (FFLTGIVFFLFFLFVVVVSLI) threads the bilayer. At 369–402 (FFKALLEVLTRARILKETSNFFQYRKNWGSIIKG) the chain is on the cytoplasmic side. A helical transmembrane segment spans residues 403–423 (TLFRLSIIAFPQVSLLAIWEF). The Lumenal portion of the chain corresponds to 424–430 (TQVNSPA). A helical transmembrane segment spans residues 431–451 (IVVDAVVILLIITGLLVYGTI). Residues 452-492 (RVFIKGRESLRLYKNPAYLLYSDTYFLNKFGFLYVQFKADK) are Cytoplasmic-facing. The helical transmembrane segment at 493-513 (FWWLLPLLSYAFLRSLFVAVL) threads the bilayer. The Lumenal portion of the chain corresponds to 514–521 (QNQGKAQA). A helical transmembrane segment spans residues 522–542 (MIIFVIELAYFVCLCWIRPYL). The Cytoplasmic segment spans residues 543–547 (DKRTN). The chain crosses the membrane as a helical span at residues 548-568 (VFNIAIHLVNLINAFFFLFFS). Residues 569–581 (NLFKQPAVVSSVM) are Lumenal-facing. Residues 582–602 (AVILFVLNAVFALFLLLFTIV) form a helical membrane-spanning segment. Topologically, residues 603 to 783 (TCTLALLHRN…ENARNNNPYL (181 aa)) are cytoplasmic. The tract at residues 681–783 (RLFDDETSSS…ENARNNNPYL (103 aa)) is disordered. Residues 688–697 (SSSSFKQNSS) are compositionally biased toward low complexity. Polar residues-rich tracts occupy residues 704–748 (VTEQ…TSSL) and 756–767 (YLGNSNKSYSHF). Positions 768–783 (NNNGSNENARNNNPYL) are enriched in low complexity.

This sequence belongs to the transient receptor potential (TRP) ion channel family.

It is found in the endoplasmic reticulum membrane. Its function is as follows. May be responsible for the transport of FAD into the endoplasmic reticulum lumen, where it is required for oxidative protein folding. In Saccharomyces cerevisiae (strain ATCC 204508 / S288c) (Baker's yeast), this protein is Flavin carrier protein 2 (FLC2).